The chain runs to 273 residues: SKA complex subunit 1 homolog (273 aa).

The stretch at 77–97 (KKLVQRSLKEEEKLQHMLANL) forms a coiled coil.

It belongs to the SKA1 family.

In Zea mays (Maize), this protein is SKA complex subunit 1 homolog.